A 344-amino-acid chain; its full sequence is Adenosine kinase (344 aa).

Residue Asp-298 is part of the active site.

The protein belongs to the carbohydrate kinase PfkB family. It depends on Mg(2+) as a cofactor.

It catalyses the reaction adenosine + ATP = AMP + ADP + H(+). It functions in the pathway purine metabolism; AMP biosynthesis via salvage pathway; AMP from adenosine: step 1/1. The sequence is that of Adenosine kinase (ADK) from Schizophyllum commune (Split gill fungus).